The primary structure comprises 219 residues: Small ribosomal subunit protein uS5 (219 aa).

An S5 DRBM domain is found at 52–115 (LDDEVLDINM…DVAKLNLISV (64 aa)). Residues 196–219 (LRNASQSRTPRRAAAKQREQEVSE) are disordered.

The protein belongs to the universal ribosomal protein uS5 family. Part of the 30S ribosomal subunit. Contacts protein S4.

Functionally, with S4 and S12 plays an important role in translational accuracy. The polypeptide is Small ribosomal subunit protein uS5 (Haloquadratum walsbyi (strain DSM 16790 / HBSQ001)).